The chain runs to 380 residues: Protein Wnt-5a (380 aa).

An N-terminal signal peptide occupies residues 1–35; it reads MKKSIGILSPGVALGMAGSAMSSKFFLVALAIFFS. A propeptide spanning residues 36–61 is cleaved from the precursor; sequence FAQVVIEANSWWSLGMNNPVQMSEVY. A disulfide bond links cysteine 104 and cysteine 115. 2 N-linked (GlcNAc...) asparagine glycosylation sites follow: asparagine 114 and asparagine 120. 10 disulfide bridges follow: cysteine 154/cysteine 162, cysteine 164/cysteine 182, cysteine 238/cysteine 252, cysteine 240/cysteine 247, cysteine 309/cysteine 340, cysteine 325/cysteine 335, cysteine 339/cysteine 379, cysteine 355/cysteine 370, cysteine 357/cysteine 367, and cysteine 362/cysteine 363. The O-palmitoleoyl serine; by PORCN moiety is linked to residue serine 244. N-linked (GlcNAc...) asparagine glycans are attached at residues asparagine 312 and asparagine 326.

It belongs to the Wnt family. Forms a soluble 1:1 complex with AFM; this prevents oligomerization and is required for prolonged biological activity. The complex with AFM may represent the physiological form in body fluids. Homooligomer; disulfide-linked, leading to inactivation (in vitro). Interacts with PORCN. Interacts with WLS. Interacts with glypican GCP3. Interacts with PKD1 (via extracellular domain). Interacts with TMEM67. In terms of processing, glycosylation is necessary for secretion but not for activity. Palmitoleoylation is required for efficient binding to frizzled receptors. Depalmitoleoylation leads to Wnt signaling pathway inhibition. Post-translationally, proteolytic processing by TIKI1 and TIKI2 promotes oxidation and formation of large disulfide-bond oligomers, leading to inactivation of WNT5A. Expression is increased in differentiated thyroid carcinomas compared to normal thyroid tissue and anaplastic thyroid tumors where expression is low or undetectable. Expression is found in thyrocytes but not in stromal cells (at protein level). Detected in neonate heart and lung.

The protein localises to the secreted. It is found in the extracellular space. It localises to the extracellular matrix. Its function is as follows. Ligand for members of the frizzled family of seven transmembrane receptors. Can activate or inhibit canonical Wnt signaling, depending on receptor context. In the presence of FZD4, activates beta-catenin signaling. In the presence of ROR2, inhibits the canonical Wnt pathway by promoting beta-catenin degradation through a GSK3-independent pathway which involves down-regulation of beta-catenin-induced reporter gene expression. Suppression of the canonical pathway allows chondrogenesis to occur and inhibits tumor formation. Stimulates cell migration. Decreases proliferation, migration, invasiveness and clonogenicity of carcinoma cells and may act as a tumor suppressor. Mediates motility of melanoma cells. Required during embryogenesis for extension of the primary anterior-posterior axis and for outgrowth of limbs and the genital tubercle. Inhibits type II collagen expression in chondrocytes. This is Protein Wnt-5a (WNT5A) from Homo sapiens (Human).